The chain runs to 98 residues: NADH-ubiquinone oxidoreductase chain 4L (98 aa).

3 consecutive transmembrane segments (helical) span residues 1–21 (MIPT…GMLT), 29–49 (SLLC…LIAL), and 61–81 (IILL…LVSI).

This sequence belongs to the complex I subunit 4L family. Core subunit of respiratory chain NADH dehydrogenase (Complex I) which is composed of 45 different subunits.

The protein localises to the mitochondrion inner membrane. The enzyme catalyses a ubiquinone + NADH + 5 H(+)(in) = a ubiquinol + NAD(+) + 4 H(+)(out). Core subunit of the mitochondrial membrane respiratory chain NADH dehydrogenase (Complex I) which catalyzes electron transfer from NADH through the respiratory chain, using ubiquinone as an electron acceptor. Part of the enzyme membrane arm which is embedded in the lipid bilayer and involved in proton translocation. This chain is NADH-ubiquinone oxidoreductase chain 4L (MT-ND4L), found in Macaca ochreata subsp. brunnescens (Muna-buton macaque).